Consider the following 71-residue polypeptide: MFTLKKSFLLLFFLGTITLSLCEQERGADEDDGVEMTEEEVKRGLLDTIKNTAKNLAVGLLDKIKCKMTGC.

The first 22 residues, 1–22 (MFTLKKSFLLLFFLGTITLSLC), serve as a signal peptide directing secretion. A propeptide spanning residues 23-43 (EQERGADEDDGVEMTEEEVKR) is cleaved from the precursor. Cysteines 66 and 71 form a disulfide.

Expressed by the skin glands.

It localises to the secreted. Functionally, antimicrobial peptide. The chain is Ranatuerin-2Va from Odorrana versabilis (Chinese bamboo leaf odorous frog).